Here is a 382-residue protein sequence, read N- to C-terminus: uncharacterized protein (382 aa).

The next 12 helical transmembrane spans lie at 14–34 (GLLLLTLAIAVLNTLVLLWLA), 45–65 (MVSSSYFTGNLVGTLFTGYLI), 75–95 (YLASLIFAAGCVGLGVMVGFW), 102–122 (FIAGIGCAMIWVVVESALMCS), 131–151 (LLAAYMMVYYMGTFLGQLLVS), 157–177 (LLHVLPWVTGMILAGILPLLF), 204–224 (LGVNGCIISGIVLGSLYGLMP), 231–251 (GMANASIGFWMAVLVSAGILG), 270–290 (VQVFVVILGSIAMLTQAAMAP), 291–311 (ALFILGAAGFTLYPVAMAWAC), 325–345 (ALLLSYTVGSLLGPSFAAMLM), and 349–369 (SDNLLFIMIASVSFIYLLMLL).

The protein belongs to the major facilitator superfamily. YcaD (TC 2.A.1.26) family.

It is found in the cell inner membrane. This is an uncharacterized protein from Salmonella paratyphi A (strain ATCC 9150 / SARB42).